Reading from the N-terminus, the 134-residue chain is NAD(P)H-quinone oxidoreductase subunit 3 (134 aa).

A run of 3 helical transmembrane segments spans residues 20-40 (GYDA…LALV), 78-98 (MFAL…PWAV), and 103-123 (LGLL…VALA).

The protein belongs to the complex I subunit 3 family. As to quaternary structure, NDH-1 can be composed of about 15 different subunits; different subcomplexes with different compositions have been identified which probably have different functions.

Its subcellular location is the cellular thylakoid membrane. It carries out the reaction a plastoquinone + NADH + (n+1) H(+)(in) = a plastoquinol + NAD(+) + n H(+)(out). The enzyme catalyses a plastoquinone + NADPH + (n+1) H(+)(in) = a plastoquinol + NADP(+) + n H(+)(out). NDH-1 shuttles electrons from an unknown electron donor, via FMN and iron-sulfur (Fe-S) centers, to quinones in the respiratory and/or the photosynthetic chain. The immediate electron acceptor for the enzyme in this species is believed to be plastoquinone. Couples the redox reaction to proton translocation, and thus conserves the redox energy in a proton gradient. Cyanobacterial NDH-1 also plays a role in inorganic carbon-concentration. The chain is NAD(P)H-quinone oxidoreductase subunit 3 from Prochlorococcus marinus (strain MIT 9303).